The following is a 549-amino-acid chain: Cilia- and flagella-associated protein 45 (549 aa).

Positions 1–27 (MPLSTAGVLSSASTASNRSRNRPRYRT) are disordered. Coiled coils occupy residues 119–232 (KEEL…MMEV) and 259–393 (IVEQ…KRNQ). Residues 391 to 416 (RNQEVADREWRRKEKENAQKKMETEA) are disordered.

Belongs to the CFAP45 family. In terms of assembly, microtubule inner protein component of sperm flagellar doublet microtubules. Interacts with AK8; dimerization with AK8 may create a cavity at the interface of the dimer that can accommodate AMP. Interacts with CFAP52. Interacts with ENKUR. Directly interacts with DNALI1. Interacts with DNAH11. Interacts with DNAI1. Expressed in trachea multiciliated cells.

The protein resides in the cytoplasm. It localises to the cytoskeleton. It is found in the cilium axoneme. Its subcellular location is the flagellum axoneme. The protein localises to the cell projection. The protein resides in the cilium. It localises to the flagellum. Functionally, microtubule inner protein (MIP) part of the dynein-decorated doublet microtubules (DMTs) in cilia axoneme, which is required for motile cilia beating. It is an AMP-binding protein that may facilitate dynein ATPase-dependent ciliary and flagellar beating via adenine nucleotide homeostasis. May function as a donor of AMP to AK8 and hence promote ADP production. This chain is Cilia- and flagella-associated protein 45, found in Bos taurus (Bovine).